A 122-amino-acid chain; its full sequence is Small ribosomal subunit protein uS12c (122 aa).

It belongs to the universal ribosomal protein uS12 family. As to quaternary structure, part of the 30S ribosomal subunit.

Its subcellular location is the plastid. It is found in the chloroplast. Its function is as follows. With S4 and S5 plays an important role in translational accuracy. Located at the interface of the 30S and 50S subunits. This chain is Small ribosomal subunit protein uS12c (rps12), found in Illicium oligandrum (Star anise).